Reading from the N-terminus, the 409-residue chain is S-adenosylmethionine synthase (409 aa).

Residue histidine 15 participates in ATP binding. Residue aspartate 17 coordinates Mg(2+). Glutamate 43 contacts K(+). Glutamate 56 and glutamine 100 together coordinate L-methionine. Residues 100–110 are flexible loop; it reads QSSDIAQGVNE. ATP-binding positions include 171-173, 248-249, aspartate 257, 263-264, alanine 280, and lysine 284; these read DGK, KF, and RK. Residue aspartate 257 coordinates L-methionine. Residue lysine 288 participates in L-methionine binding.

Belongs to the AdoMet synthase family. In terms of assembly, homotetramer; dimer of dimers. It depends on Mg(2+) as a cofactor. K(+) is required as a cofactor.

Its subcellular location is the cytoplasm. It catalyses the reaction L-methionine + ATP + H2O = S-adenosyl-L-methionine + phosphate + diphosphate. It participates in amino-acid biosynthesis; S-adenosyl-L-methionine biosynthesis; S-adenosyl-L-methionine from L-methionine: step 1/1. Functionally, catalyzes the formation of S-adenosylmethionine (AdoMet) from methionine and ATP. The overall synthetic reaction is composed of two sequential steps, AdoMet formation and the subsequent tripolyphosphate hydrolysis which occurs prior to release of AdoMet from the enzyme. The polypeptide is S-adenosylmethionine synthase (Prochlorococcus marinus (strain NATL2A)).